Consider the following 747-residue polypeptide: Histone-lysine N-methyltransferase EZH1 (747 aa).

The interval 186-229 is disordered; sequence YSDEDEEGHNDTSDGKQDDSKEDLPVTRKRKRHAIEGSKKSSKK. The span at 194-211 shows a compositional bias: basic and acidic residues; that stretch reads HNDTSDGKQDDSKEDLPV. K327 is covalently cross-linked (Glycyl lysine isopeptide (Lys-Gly) (interchain with G-Cter in SUMO2)). The tract at residues 375 to 421 is disordered; that stretch reads TSASAVAETKEGDSDRDTGNDWASSSSEANSRCQTPTKQKASPAPPQ. The segment covering 382-393 has biased composition (basic and acidic residues); sequence ETKEGDSDRDTG. Residues 395–414 are compositionally biased toward polar residues; sequence DWASSSSEANSRCQTPTKQK. The 103-residue stretch at 504–606 folds into the CXC domain; it reads CRKIQLKKDN…CKVVSCKNCS (103 aa). The 116-residue stretch at 613-728 folds into the SET domain; sequence KHLLLAPSDV…AGEELFFDYR (116 aa).

The protein belongs to the class V-like SAM-binding methyltransferase superfamily. Histone-lysine methyltransferase family. EZ subfamily. Component of the PRC2/EED-EZH1 complex, which includes EED, EZH1, SUZ12, RBBP4 and AEBP2. The PRC2/EED-EZH1 is less abundant than the PRC2/EED-EZH2 complex, has weak methyltransferase activity and compacts chromatin in the absence of the methyltransferase cofactor S-adenosyl-L-methionine (SAM). Interacts with EZHIP; the interaction blocks EZH1 methyltransferase activity.

It localises to the nucleus. It catalyses the reaction L-lysyl(27)-[histone H3] + 3 S-adenosyl-L-methionine = N(6),N(6),N(6)-trimethyl-L-lysyl(27)-[histone H3] + 3 S-adenosyl-L-homocysteine + 3 H(+). Polycomb group (PcG) protein. Catalytic subunit of the PRC2/EED-EZH1 complex, which methylates 'Lys-27' of histone H3, leading to transcriptional repression of the affected target gene. Able to mono-, di- and trimethylate 'Lys-27' of histone H3 to form H3K27me1, H3K27me2 and H3K27me3, respectively. Required for embryonic stem cell derivation and self-renewal, suggesting that it is involved in safeguarding embryonic stem cell identity. Compared to EZH2-containing complexes, it is less abundant in embryonic stem cells, has weak methyltransferase activity and plays a less critical role in forming H3K27me3, which is required for embryonic stem cell identity and proper differentiation. This is Histone-lysine N-methyltransferase EZH1 (EZH1) from Bos taurus (Bovine).